The chain runs to 360 residues: UDP-3-O-acylglucosamine N-acyltransferase (360 aa).

The active-site Proton acceptor is the histidine 256. A disordered region spans residues 341-360 (EGSGAETAARPDDDRDEGRG). The span at 349-360 (ARPDDDRDEGRG) shows a compositional bias: basic and acidic residues.

This sequence belongs to the transferase hexapeptide repeat family. LpxD subfamily. As to quaternary structure, homotrimer.

It carries out the reaction a UDP-3-O-[(3R)-3-hydroxyacyl]-alpha-D-glucosamine + a (3R)-hydroxyacyl-[ACP] = a UDP-2-N,3-O-bis[(3R)-3-hydroxyacyl]-alpha-D-glucosamine + holo-[ACP] + H(+). Its pathway is bacterial outer membrane biogenesis; LPS lipid A biosynthesis. Catalyzes the N-acylation of UDP-3-O-acylglucosamine using 3-hydroxyacyl-ACP as the acyl donor. Is involved in the biosynthesis of lipid A, a phosphorylated glycolipid that anchors the lipopolysaccharide to the outer membrane of the cell. This chain is UDP-3-O-acylglucosamine N-acyltransferase, found in Rhodopseudomonas palustris (strain ATCC BAA-98 / CGA009).